The sequence spans 348 residues: Chloroacetanilide N-alkylformylase, oxygenase component (348 aa).

A Rieske domain is found at 7-108 (WYAVAWCDEV…ARERHKLIWA (102 aa)). Positions 47, 49, 66, and 69 each coordinate [2Fe-2S] cluster. His159 and His164 together coordinate Fe cation. Residue His250 participates in substrate binding. Fe cation is bound at residue Asp293.

In terms of assembly, the chloroacetanilide N-alkylformylase multicomponent enzyme system is composed of an oxygenase component (CndA) and an electron transfer component formed by a ferredoxin reductase (CndC1) and a ferredoxin (CndB1). In vitro, chloroacetanilide N-alkylformylase assays in which CndB1 is substituted for CndB2 demonstrate that the two enzymes possess nearly identical activities. The cofactor is [2Fe-2S] cluster.

The catalysed reaction is butachlor + 2 reduced [2Fe-2S]-[ferredoxin] + O2 + 2 H(+) = butyl formate + N-(2,6-diethylphenyl)-2-chloroacetamide + 2 oxidized [2Fe-2S]-[ferredoxin] + H2O. It catalyses the reaction alachlor + 2 reduced [2Fe-2S]-[ferredoxin] + O2 + 2 H(+) = methyl formate + N-(2,6-diethylphenyl)-2-chloroacetamide + 2 oxidized [2Fe-2S]-[ferredoxin] + H2O. The enzyme catalyses acetochlor + 2 reduced [2Fe-2S]-[ferredoxin] + O2 + 2 H(+) = N-(2-ethyl-6-methylphenyl)-2-chloroacetamide + ethyl formate + 2 oxidized [2Fe-2S]-[ferredoxin] + H2O. With respect to regulation, activity enhanced by Fe(2+) and Mg(2+) ions. Divalent cations such as Ca(2+), Cr(2+), Co(2+), and Mn(2+) show moderate inhibition of the enzyme, whereas heavy metal ions such as Ag(+), Cu(2+), Pb(2+), Hg(2+), Ni(2+) and Zn(2+) severely inhibit the activity. Component of the chloroacetanilide N-alkylformylase multicomponent enzyme system involved in the degradation of chloroacetanilide herbicides (N-alkoxyalkyl-N-chloroacetyl-substituted aniline derivatives). In vitro, catalyzes the N-dealkylation of butachlor, alachlor and acetochlor to yield 2-chloro-N-(2,6-diethylphenyl)acetamide (CDEPA) (for alachlor and butachlor) and 2-chloro-N-(2-methyl-6-ethylphenyl)acetamide (CMEPA) (for acetochlor). This chain is Chloroacetanilide N-alkylformylase, oxygenase component, found in Rhizorhabdus wittichii (strain DC-6 / KACC 16600) (Sphingomonas wittichii).